Consider the following 262-residue polypeptide: MAIKEETNEFSQGNEGNSHSTNNNNNSNNSNSNNNADVSAPVDDDDDDDGTSQGKTQKERRKIEIKFIQEKSRRHITFSKRKAGIMKKAYELSVLTGTQVLLLVVSETGLVYTFTTPKLQPLVTKSEGKNLIQACLNAPEEGLGDDQENQSDGNTGDSPDQSPAPATNPNVMGAAGHAHHIQQQQQQQQQAQQQAQQQMAPMPSHGLPTHYSNPQGAGNPGVPPQQQGQHQPGIPLQGGYSDQYSYFGNIQNNNIPNQQQYQ.

Disordered regions lie at residues 1–62 and 140–262; these read MAIK…ERRK and EEGL…QQYQ. Low complexity predominate over residues 17 to 35; it reads NSHSTNNNNNSNNSNSNNN. In terms of domain architecture, MADS-box spans 58 to 118; the sequence is KERRKIEIKF…GLVYTFTTPK (61 aa). The segment covering 150 to 170 has biased composition (polar residues); it reads QSDGNTGDSPDQSPAPATNPN. Composition is skewed to low complexity over residues 182–198, 224–239, and 249–262; these read QQQQ…AQQQ, PQQQ…LQGG, and NIQN…QQYQ.

As to quaternary structure, interacts with AHR1.

It localises to the nucleus. Transcription factor that is recruited by AHR1 to the promoters of genes involved in biofilm formation, which include several key adhesion genes. Plays an important role in cell adhesion, hyphal growth and virulence. Implicated in the regulation of opaque-phase-specific gene expression. The chain is Transcription factor of morphogenesis MCM1 (MCM1) from Candida albicans (strain SC5314 / ATCC MYA-2876) (Yeast).